A 1028-amino-acid chain; its full sequence is MDLNGETSTKRKRSSVAAPAERPAKHLKPGNSTLTPGDATPANGTVYNVEDEEDTGRVMPIGPAQADSPEWQATIEKVVKSVVSIHFCQTCSFDTDLSMSSQATGFVVDAERGYILTNRHVVCAGPFWGYCIFDNHEECDVHPVYRDPVHDFGILKFNPKAIRYMELTELKLRPEAARVGCEIRVVGNDAGEKLSILSGVISRLDRNAPEYGDGYCDFNTNYIQAAAAASGGSSGSPVVNIDGHAIALQAGGRADGAATDYFLPLDRPLRALECIRRGEPVTRGTIQTQWILKPFDECRRLGLTPEWEAAVRKASPHETSMLVAEIILPEGPADGKLEEGDVLLQVNGELLTQFIRLDDILDSSVGKTVRLLVQRGGQNVEVECEVGDLHAITPDRFVTVAGGTFHNLSYQQARLYAIAARGVYVCEAAGSFKLENTLSGWIIDAVDKRPTRNLDEFIEVMKTIPDRARVVISYRHIRDLHTRGTSIVYIDRHWHPKMRMAIRNDETGLWDFSDLADPVPAETPVPRKADFIQLDGVSQPAVADIVRSFVRVSCTMPLKLDGYPQAKKTGFGLVIDAGKGLVVVSRAIVPYDLCDINITVADSIIVVAKVIFMHPLQNYTIIQYDPSLVQAPVQSAELSTEYIKQGQETIFVGFNQNFRIVVAKTAVTDITTVSIPANASAPRYRAINLDAITVDTGLSGQCTNGVLIGEDGVVQALWLNYLGERTPNSHKDVEYHLGFATPALLPVTSKIQQGIIPKLRILNMESYVVQMSQARIMGVSEEWIQKVAQANPSRHQLFMVRKVDCPPPQFTSNADSLQEGDIILTLDGQLITRVSELDKMYEKEVLDALIVRNGQEIHLKLPTVPTEDLETDRAVVFCGAVLQKPHHAVRQQISKLHSEVYVSARSRGSPAYQYGLAPTNFITAVNGVSTPNLDSFVREVSMIPDNTYFRLRAVTFDNVPWVVTMKKNDHYFPMSEYVKDPSQPLGWRTVSHERDRHKDGITPDAANLNPDAMDEVYEEVSDVEPEVD.

The interval 1–46 is disordered; that stretch reads MDLNGETSTKRKRSSVAAPAERPAKHLKPGNSTLTPGDATPANGTV. The segment at 82 to 266 is serine protease; that stretch reads VVSIHFCQTC…AATDYFLPLD (185 aa). Catalysis depends on charge relay system residues His-120, Asp-151, and Ser-233. PDZ domains are found at residues 289–374 and 876–957; these read QWIL…LLVQ and VFCG…VTFD. The span at 991-1001 shows a compositional bias: basic and acidic residues; the sequence is SHERDRHKDGI. The interval 991–1028 is disordered; sequence SHERDRHKDGITPDAANLNPDAMDEVYEEVSDVEPEVD. The segment covering 1012–1028 has biased composition (acidic residues); it reads AMDEVYEEVSDVEPEVD.

Belongs to the peptidase S1C family.

Its subcellular location is the nucleus. Its function is as follows. Nuclear serine protease which mediates apoptosis. The chain is Pro-apoptotic serine protease nma111 (nma111) from Aspergillus fumigatus (strain ATCC MYA-4609 / CBS 101355 / FGSC A1100 / Af293) (Neosartorya fumigata).